The following is a 209-amino-acid chain: MIGLVGKKVGMTRIFTEDGVSIPVTVIEVEANRVTQVKDLANDGYRAVQVTTGVKKANRVTKPEAGHFAKAGVEAGRGLWEFRLAEGEEYTVGQSISVELFADVKKVDVTGTSKGKGFAGTVKRWNFRTQDATHGNSLSHRVPGSIGQNQTPGKVFKGKKMAGQMGNERVTVQSLDVVRVDAERNLLLVKGGVPGATGCDLIVKPAVKA.

Q150 is subject to N5-methylglutamine.

It belongs to the universal ribosomal protein uL3 family. Part of the 50S ribosomal subunit. Forms a cluster with proteins L14 and L19. Post-translationally, methylated by PrmB.

In terms of biological role, one of the primary rRNA binding proteins, it binds directly near the 3'-end of the 23S rRNA, where it nucleates assembly of the 50S subunit. The protein is Large ribosomal subunit protein uL3 of Salmonella arizonae (strain ATCC BAA-731 / CDC346-86 / RSK2980).